The following is a 129-amino-acid chain: Large ribosomal subunit protein bL12 (129 aa).

It belongs to the bacterial ribosomal protein bL12 family. In terms of assembly, homodimer. Part of the ribosomal stalk of the 50S ribosomal subunit. Forms a multimeric L10(L12)X complex, where L10 forms an elongated spine to which 2 to 4 L12 dimers bind in a sequential fashion. Binds GTP-bound translation factors.

Forms part of the ribosomal stalk which helps the ribosome interact with GTP-bound translation factors. Is thus essential for accurate translation. The sequence is that of Large ribosomal subunit protein bL12 from Maridesulfovibrio salexigens (strain ATCC 14822 / DSM 2638 / NCIMB 8403 / VKM B-1763) (Desulfovibrio salexigens).